Reading from the N-terminus, the 211-residue chain is Suppressor of RNA silencing p3 (211 aa).

This sequence belongs to the tenuiviruses p3 protein family. In terms of assembly, homodimer.

It localises to the host cytoplasm. Acts as a suppressor of RNA-mediated gene silencing, also known as post-transcriptional gene silencing (PTGS), presumably through the binding of dsRNA. This chain is Suppressor of RNA silencing p3, found in Avena sativa (Oat).